The primary structure comprises 461 residues: uncharacterized protein (461 aa).

Disordered regions lie at residues 254-273 (NNNN…NNNN) and 368-414 (QPSQ…NNNS). Positions 381–413 (NNNNNNNNNNNNNNNNNNNNNNNNNNNNNNNNN) are enriched in low complexity.

This is an uncharacterized protein from Dictyostelium discoideum (Social amoeba).